A 317-amino-acid polypeptide reads, in one-letter code: MQILLANPRGFCAGVDRAISIVERAIEMYGAPIYVRHEVVHNRYVVESLCERGAIFIEEISEVPDGSILIFSAHGVSQAVRAEARSRNLTMLFDATCPLVTKVHMEVARASRKGKEAILIGHAGHPEVEGTMGQYSNPNGGMYLVESPDDVWQLNVKDENNLCFMTQTTLSVDDTSAVIDALNTRFPKIVGPRKDDICYATTNRQEAVRNLANDADIVLVVGSKNSSNSNRLAELVQRMGKPAYLIDSAADIQEFWLQGAKCIGVTAGASAPDILVQQVIARLKDLGAGESIELSGREENIVFEVPKELRVEVKQID.

A [4Fe-4S] cluster-binding site is contributed by cysteine 12. 2 residues coordinate (2E)-4-hydroxy-3-methylbut-2-enyl diphosphate: histidine 41 and histidine 74. Residues histidine 41 and histidine 74 each coordinate dimethylallyl diphosphate. 2 residues coordinate isopentenyl diphosphate: histidine 41 and histidine 74. Cysteine 97 is a binding site for [4Fe-4S] cluster. Residue histidine 125 coordinates (2E)-4-hydroxy-3-methylbut-2-enyl diphosphate. Position 125 (histidine 125) interacts with dimethylallyl diphosphate. Position 125 (histidine 125) interacts with isopentenyl diphosphate. Catalysis depends on glutamate 127, which acts as the Proton donor. Threonine 168 serves as a coordination point for (2E)-4-hydroxy-3-methylbut-2-enyl diphosphate. Residue cysteine 198 participates in [4Fe-4S] cluster binding. Residues serine 226, serine 227, asparagine 228, and serine 270 each coordinate (2E)-4-hydroxy-3-methylbut-2-enyl diphosphate. Serine 226, serine 227, asparagine 228, and serine 270 together coordinate dimethylallyl diphosphate. 4 residues coordinate isopentenyl diphosphate: serine 226, serine 227, asparagine 228, and serine 270.

The protein belongs to the IspH family. As to quaternary structure, homodimer. Requires [4Fe-4S] cluster as cofactor.

The catalysed reaction is isopentenyl diphosphate + 2 oxidized [2Fe-2S]-[ferredoxin] + H2O = (2E)-4-hydroxy-3-methylbut-2-enyl diphosphate + 2 reduced [2Fe-2S]-[ferredoxin] + 2 H(+). It catalyses the reaction dimethylallyl diphosphate + 2 oxidized [2Fe-2S]-[ferredoxin] + H2O = (2E)-4-hydroxy-3-methylbut-2-enyl diphosphate + 2 reduced [2Fe-2S]-[ferredoxin] + 2 H(+). The protein operates within isoprenoid biosynthesis; dimethylallyl diphosphate biosynthesis; dimethylallyl diphosphate from (2E)-4-hydroxy-3-methylbutenyl diphosphate: step 1/1. It functions in the pathway isoprenoid biosynthesis; isopentenyl diphosphate biosynthesis via DXP pathway; isopentenyl diphosphate from 1-deoxy-D-xylulose 5-phosphate: step 6/6. Catalyzes the conversion of 1-hydroxy-2-methyl-2-(E)-butenyl 4-diphosphate (HMBPP) into a mixture of isopentenyl diphosphate (IPP) and dimethylallyl diphosphate (DMAPP). Acts in the terminal step of the DOXP/MEP pathway for isoprenoid precursor biosynthesis. In Yersinia pestis bv. Antiqua (strain Antiqua), this protein is 4-hydroxy-3-methylbut-2-enyl diphosphate reductase.